A 288-amino-acid polypeptide reads, in one-letter code: 4-hydroxybenzoate octaprenyltransferase (288 aa).

Helical transmembrane passes span 23–43 (IGSL…GKGI), 46–66 (TKIL…GCVV), 98–118 (ILFV…NSMT), 141–161 (LPQV…FAAV), 165–185 (LPLV…AYDT), 213–233 (LIIG…GWLM), 234–254 (NLGG…VHQQ), and 268–288 (AFLN…ISYL).

It belongs to the UbiA prenyltransferase family. The cofactor is Mg(2+).

It localises to the cell inner membrane. It carries out the reaction all-trans-octaprenyl diphosphate + 4-hydroxybenzoate = 4-hydroxy-3-(all-trans-octaprenyl)benzoate + diphosphate. The protein operates within cofactor biosynthesis; ubiquinone biosynthesis. Functionally, catalyzes the prenylation of para-hydroxybenzoate (PHB) with an all-trans polyprenyl group. Mediates the second step in the final reaction sequence of ubiquinone-8 (UQ-8) biosynthesis, which is the condensation of the polyisoprenoid side chain with PHB, generating the first membrane-bound Q intermediate 3-octaprenyl-4-hydroxybenzoate. This Yersinia enterocolitica serotype O:8 / biotype 1B (strain NCTC 13174 / 8081) protein is 4-hydroxybenzoate octaprenyltransferase.